Reading from the N-terminus, the 206-residue chain is Casparian strip membrane protein 1 (206 aa).

At Ala-2 the chain carries N-acetylalanine. At 2–43 (AKESTTIDVGEPSTVTKSSSHVVKDAKKKGFVAVASRGGAKR) the chain is on the cytoplasmic side. Residues 44-64 (GLAIFDFLLRLAAIAVTIGAA) form a helical membrane-spanning segment. At 65 to 95 (SVMYTAEETLPFFTQFLQFQAGYDDLPAFQY) the chain is on the extracellular side. The chain crosses the membrane as a helical span at residues 96 to 116 (FVIAVAVVASYLVLSLPFSIV). Residues 117–127 (SIVRPHAVAPR) lie on the Cytoplasmic side of the membrane. A helical transmembrane segment spans residues 128 to 148 (LILLICDTLVVTLNTSAAAAA). Over 149-180 (ASITYLAHNGNQSTNWLPICQQFGDFCQNVST) the chain is Extracellular. Asn-159 and Asn-177 each carry an N-linked (GlcNAc...) asparagine glycan. Residues 181–201 (AVVADSIAILFFIVLIIISAI) form a helical membrane-spanning segment. Topologically, residues 202-206 (ALKRH) are cytoplasmic.

The protein belongs to the Casparian strip membrane proteins (CASP) family. As to quaternary structure, homodimer and heterodimers with other CASP proteins. Interacts with CASP2, CASP3, CASP4 and CASP5.

Its subcellular location is the cell membrane. Functionally, regulates membrane-cell wall junctions and localized cell wall deposition. Required for establishment of the Casparian strip membrane domain (CSD) and the subsequent formation of Casparian strips, a cell wall modification of the root endodermis that determines an apoplastic barrier between the intraorganismal apoplasm and the extraorganismal apoplasm and prevents lateral diffusion. This is Casparian strip membrane protein 1 (CASP1) from Arabidopsis thaliana (Mouse-ear cress).